The following is a 102-amino-acid chain: Citrate lyase acyl carrier protein (102 aa).

The residue at position 14 (Ser14) is an O-(phosphoribosyl dephospho-coenzyme A)serine.

The protein belongs to the CitD family. As to quaternary structure, oligomer with a subunit composition of (alpha,beta,gamma)6.

The protein resides in the cytoplasm. Functionally, covalent carrier of the coenzyme of citrate lyase. The polypeptide is Citrate lyase acyl carrier protein (Serratia proteamaculans (strain 568)).